Reading from the N-terminus, the 100-residue chain is MTIFNAVDKFTMMSGDRVKIKDLLSSRLTECGWRDEVRLLCRSILQEKGAISSFTVEQLVTEVTPRARSLVPDAVKKELLIKIRTIFDENEDDDIDPEDA.

The protein belongs to the ENY2 family. As to quaternary structure, component of the nuclear pore complex (NPC)-associated AMEX complex (anchoring and mRNA export complex), composed of at least e(y)2 and xmas-2. Component of the SAGA transcription coactivator-HAT complexes, at least composed of Ada2b, e(y)2, Pcaf/Gcn5, Taf10 and Nipped-A/Trrap. Within the SAGA complex, e(y)2, Sgf11, and not/nonstop form an additional subcomplex of SAGA called the DUB module (deubiquitination module). Component of the THO complex, composed of at least e(y)2, HPR1, THO2, THOC5, THOC6 and THOC7. Interacts with e(y)1. Interacts with su(Hw) (via zinc fingers). Interacts with xmas-2; required for localization to the nuclear periphery. Interacts with the nuclear pore complex (NPC).

It localises to the nucleus. It is found in the nucleoplasm. Its subcellular location is the cytoplasm. Functionally, involved in mRNA export coupled transcription activation by association with both the AMEX and the SAGA complexes. The SAGA complex is a multiprotein complex that activates transcription by remodeling chromatin and mediating histone acetylation and deubiquitination. Within the SAGA complex, participates in a subcomplex that specifically deubiquitinates histone H2B. The SAGA complex is recruited to specific gene promoters by activators, where it is required for transcription. Required for nuclear receptor-mediated transactivation. Involved in transcription elongation by recruiting the THO complex onto nascent mRNA. The AMEX complex functions in docking export-competent ribonucleoprotein particles (mRNPs) to the nuclear entrance of the nuclear pore complex (nuclear basket). AMEX participates in mRNA export and accurate chromatin positioning in the nucleus by tethering genes to the nuclear periphery. The polypeptide is Enhancer of yellow 2 transcription factor (Drosophila persimilis (Fruit fly)).